The primary structure comprises 659 residues: DNA ligase (659 aa).

NAD(+) contacts are provided by residues D32–D36, S81–L82, and E110. K112 serves as the catalytic N6-AMP-lysine intermediate. NAD(+) contacts are provided by R133, E168, K284, and K308. Positions 402, 405, 420, and 425 each coordinate Zn(2+). A BRCT domain is found at A582–P659.

Belongs to the NAD-dependent DNA ligase family. LigA subfamily. Requires Mg(2+) as cofactor. It depends on Mn(2+) as a cofactor.

It catalyses the reaction NAD(+) + (deoxyribonucleotide)n-3'-hydroxyl + 5'-phospho-(deoxyribonucleotide)m = (deoxyribonucleotide)n+m + AMP + beta-nicotinamide D-nucleotide.. In terms of biological role, DNA ligase that catalyzes the formation of phosphodiester linkages between 5'-phosphoryl and 3'-hydroxyl groups in double-stranded DNA using NAD as a coenzyme and as the energy source for the reaction. It is essential for DNA replication and repair of damaged DNA. This Desulfitobacterium hafniense (strain Y51) protein is DNA ligase.